Consider the following 253-residue polypeptide: REF/SRPP-like protein Os05g0151300/LOC_Os05g05940 (253 aa).

Residues 1–26 (MADSGSDAPISNRPEEEVTVEKTPEM) are disordered. Residues 13-26 (RPEEEVTVEKTPEM) show a composition bias toward basic and acidic residues.

This sequence belongs to the REF/SRPP family.

The polypeptide is REF/SRPP-like protein Os05g0151300/LOC_Os05g05940 (Oryza sativa subsp. japonica (Rice)).